We begin with the raw amino-acid sequence, 66 residues long: Repressor protein C4 (66 aa).

Repressor of the ant/reb gene. This chain is Repressor protein C4 (C4), found in Escherichia phage P1 (Bacteriophage P1).